The primary structure comprises 141 residues: Transcriptional regulator MraZ (141 aa).

2 SpoVT-AbrB domains span residues 5 to 47 (EYNH…PNEE) and 75 to 118 (AADC…SKER).

It belongs to the MraZ family. Forms oligomers.

The protein localises to the cytoplasm. Its subcellular location is the nucleoid. In Lachnoclostridium phytofermentans (strain ATCC 700394 / DSM 18823 / ISDg) (Clostridium phytofermentans), this protein is Transcriptional regulator MraZ.